The primary structure comprises 480 residues: PTS system sucrose-specific EIIBC component (480 aa).

The 84-residue stretch at 4–87 folds into the PTS EIIB type-1 domain; sequence KKSAENILQA…EKITGKEASS (84 aa). Residue cysteine 26 is the Phosphocysteine intermediate; for EIIB activity of the active site. 8 consecutive transmembrane segments (helical) span residues 109 to 129, 158 to 178, 182 to 202, 264 to 284, 303 to 323, 349 to 369, 405 to 425, and 449 to 469; these read LSDIFVPIIPAIVAGGLLMGI, MINIFANAPFTLLPILIGFSA, FGGNAYLGAALGMILVHPELM, LLTPLLAILSTGFITFSFVGP, FGGAIGGLIFGLLYAPIVITG, PIATMSNIAQGAAALAAFFII, PFIGAIVGSGIGSAYIAFFKV, and LHYGIAMIIAFIVAFGVTYAL. Positions 120 to 480 constitute a PTS EIIC type-1 domain; the sequence is IVAGGLLMGI…YRKKYRNIEA (361 aa).

The protein resides in the cell membrane. It carries out the reaction N(pros)-phospho-L-histidyl-[protein](out) + sucrose = sucrose 6(G)-phosphate(in) + L-histidyl-[protein]. Its function is as follows. The phosphoenolpyruvate-dependent sugar phosphotransferase system (sugar PTS), a major carbohydrate active transport system, catalyzes the phosphorylation of incoming sugar substrates concomitantly with their translocation across the cell membrane. This system is involved in sucrose transport. This Staphylococcus xylosus protein is PTS system sucrose-specific EIIBC component.